The following is a 504-amino-acid chain: Alkylcitrate dehydratase phiI (504 aa).

It belongs to the PrpD family. Monomer.

The enzyme catalyses (4E,11E)-2-hydroxytrideca-4,11-dien-1,2,3-tricarboxylate + 2 H(+) = [4-(deca-1,8-diyl)-2,5-dioxo-2,5-dihydro-3-furanyl]acetate + 2 H2O. The protein operates within secondary metabolite biosynthesis. In terms of biological role, alkylcitrate dehydratase; part of the gene cluster that mediates the biosynthesis of the antihypercholesterolemic agents phomoidrides which are dimeric anhydrides. Within the pathway, the alkylcitrate synthase (ACS) phiJ and the alkylcitrate dehydratase (ACDH) phiI produce the decarboxylated monomeric anhydrides by coupling the C12-fatty acyl product from phiA with oxalacetic acid. The pathway begins with the highly reducing polyketide synthase phiA that catalyzes the formation of a C12-fatty acyl-ACP, starting from one acetate and 5 malonate units. The hydrolase phiM is involved in the release of the C12-fatty acyl chain from phiA. The alkylcitrate synthase (ACS) phiJ and the alkylcitrate dehydratase (ACDH) phiI then give rise to decarboxylated monomeric anhydrides by coupling the C12-fatty acyl chain with oxalacetic acid. The cyclase phiC is responsible for the dimerization of the monomeric anhydrides which leads to the production of prephomoidride that contains the characteristic bicyclo[4.3.1]deca-1,6-diene system of phomoidrides. Iterative oxidation catalyzed by the alpha-ketoglutarate-dependent dioxygenase phiK produced then phomoidride A. Finally, the methyltransferase phiE converts phomoidride A to phomoidride B via an acetalization reaction. The phosphatidylethanolamine-binding protein phiB and phiN are not essential for dimerization and their functions have still to be determined. This is Alkylcitrate dehydratase phiI from Fungal sp. (strain ATCC 74256).